Here is a 163-residue protein sequence, read N- to C-terminus: Transcription elongation factor GreA (163 aa).

Positions Tyr12–Gln73 form a coiled coil.

The protein belongs to the GreA/GreB family.

Functionally, necessary for efficient RNA polymerase transcription elongation past template-encoded arresting sites. The arresting sites in DNA have the property of trapping a certain fraction of elongating RNA polymerases that pass through, resulting in locked ternary complexes. Cleavage of the nascent transcript by cleavage factors such as GreA or GreB allows the resumption of elongation from the new 3'terminus. GreA releases sequences of 2 to 3 nucleotides. This is Transcription elongation factor GreA from Nitratiruptor sp. (strain SB155-2).